A 550-amino-acid chain; its full sequence is MLHYLATILWLAVAHASPGTPVIDWADRNYALVSVNSEATAYENLVERKAGVSVPVSWNVWNGGVGDMAYVLFNENQVWKGAAAAKRATIDVSKSGQFNMRVKLCDDDGFSVSEPVTVRVADTDGGHLSPLEYAWGENNKPGRPHNKTVAAYFVEWGVYGRGFPVDKVPLPNLSHLLYGFIPICGGDGLNDALKTIPGSFEALQRSCKGRADFKVAIHDPWAAIQKPQKGVSAWNEPYKGNFGQLMAAKLANPHLKILPSIGGWTLSDPFYFMHDADKRRVFVESVKEFLQVWKFFDGVDIDWEFPGGKGANPALGNGERDADTYLVLLKELRAMLDELQLQTNKTYELTSAISSGYDKIAVVKYDAAQRFLDKIFLMSYDFKGAWSNTDLGYQTTLYAPSWNANELYTTDHAVKLLTGQGVAAHKLIVGVAMYGRGWTGVSGYAGDKYFSGTADGPVPGTWENGVVDYRQINNELSKYIYRFDAAAKAAYVFNKERGDLISFDSVDSVLAKNVYVQQNGLGGLFAWEIDADNGDLLNAMNERVRVKDEL.

An N-terminal signal peptide occupies residues 1–16 (MLHYLATILWLAVAHA). 2 N-linked (GlcNAc...) asparagine; by host glycosylation sites follow: Asn146 and Asn172. The region spanning 147-547 (KTVAAYFVEW…NAMNERVRVK (401 aa)) is the GH18 domain. Residue Glu304 is the Proton donor of the active site. Residue Asn344 is glycosylated (N-linked (GlcNAc...) asparagine; by host). A Prevents secretion from ER motif is present at residues 547-550 (KDEL).

It belongs to the glycosyl hydrolase 18 family. Chitinase class II subfamily.

Its subcellular location is the host endoplasmic reticulum lumen. It catalyses the reaction Random endo-hydrolysis of N-acetyl-beta-D-glucosaminide (1-&gt;4)-beta-linkages in chitin and chitodextrins.. The protein is Probable endochitinase of Orgyia pseudotsugata (Douglas-fir tussock moth).